We begin with the raw amino-acid sequence, 466 residues long: UDP-N-acetylmuramoylalanine--D-glutamate ligase (466 aa).

115–121 is a binding site for ATP; that stretch reads GTDGKTT.

This sequence belongs to the MurCDEF family.

The protein resides in the cytoplasm. It carries out the reaction UDP-N-acetyl-alpha-D-muramoyl-L-alanine + D-glutamate + ATP = UDP-N-acetyl-alpha-D-muramoyl-L-alanyl-D-glutamate + ADP + phosphate + H(+). It participates in cell wall biogenesis; peptidoglycan biosynthesis. Functionally, cell wall formation. Catalyzes the addition of glutamate to the nucleotide precursor UDP-N-acetylmuramoyl-L-alanine (UMA). In Chlorobium phaeobacteroides (strain BS1), this protein is UDP-N-acetylmuramoylalanine--D-glutamate ligase.